The chain runs to 148 residues: 3-dehydroquinate dehydratase (148 aa).

Tyrosine 23 functions as the Proton acceptor in the catalytic mechanism. Substrate-binding residues include asparagine 74, histidine 80, and aspartate 87. Residue histidine 100 is the Proton donor of the active site. Substrate contacts are provided by residues 101-102 and arginine 111; that span reads IS.

Belongs to the type-II 3-dehydroquinase family. As to quaternary structure, homododecamer.

It catalyses the reaction 3-dehydroquinate = 3-dehydroshikimate + H2O. It participates in metabolic intermediate biosynthesis; chorismate biosynthesis; chorismate from D-erythrose 4-phosphate and phosphoenolpyruvate: step 3/7. In terms of biological role, catalyzes a trans-dehydration via an enolate intermediate. This chain is 3-dehydroquinate dehydratase, found in Thermoanaerobacter pseudethanolicus (strain ATCC 33223 / 39E) (Clostridium thermohydrosulfuricum).